The following is a 115-amino-acid chain: Large ribosomal subunit protein bL19 (115 aa).

Belongs to the bacterial ribosomal protein bL19 family.

Its function is as follows. This protein is located at the 30S-50S ribosomal subunit interface and may play a role in the structure and function of the aminoacyl-tRNA binding site. The chain is Large ribosomal subunit protein bL19 from Buchnera aphidicola subsp. Cinara cedri (strain Cc).